The following is a 181-amino-acid chain: MAREKAQILDKDGIRRSLTRIAHEIIERNKGTGNLVLVGIRRRGVPLAERLAGRIKDIEGRTVPVGILDITLYRDDLTTLAHQPVVRSTEVPFSVSGKIVVLVDDVIYTGRTVRAALDAIMDLGRPKLIQLAVLIDRGHRELPIRADYVGKNVPTSSREEVSVRLQEIDGEERVVILETAE.

A PRPP-binding motif is present at residues 100–112 (VVLVDDVIYTGRT).

Belongs to the purine/pyrimidine phosphoribosyltransferase family. PyrR subfamily. In terms of assembly, homodimer and homohexamer; in equilibrium.

The catalysed reaction is UMP + diphosphate = 5-phospho-alpha-D-ribose 1-diphosphate + uracil. Regulates transcriptional attenuation of the pyrimidine nucleotide (pyr) operon by binding in a uridine-dependent manner to specific sites on pyr mRNA. This disrupts an antiterminator hairpin in the RNA and favors formation of a downstream transcription terminator, leading to a reduced expression of downstream genes. Functionally, also displays a weak uracil phosphoribosyltransferase activity which is not physiologically significant. The polypeptide is Bifunctional protein PyrR (Pelotomaculum thermopropionicum (strain DSM 13744 / JCM 10971 / SI)).